A 66-amino-acid polypeptide reads, in one-letter code: Truncated interferon antagonist OPG039 (66 aa).

The stretch at 29–58 (HGHSALYYAIADNNMRLVCTLLNAGALKNL) is one ANK repeat.

It belongs to the orthopoxvirus OPG039 family.

The polypeptide is Truncated interferon antagonist OPG039 (OPG040) (Homo sapiens (Human)).